Here is a 195-residue protein sequence, read N- to C-terminus: Holliday junction branch migration complex subunit RuvA (195 aa).

Residues 1 to 61 form a domain I region; it reads MYEYLDGVVV…ENDQTLYGFK (61 aa). Residues 62–139 are domain II; the sequence is KAEDKELFLN…AVENEVGTLF (78 aa). The tract at residues 139 to 143 is flexible linker; that stretch reads FDLST. Residues 144-195 form a domain III region; that stretch reads TSNQALDEALEALIALGYSEKEVKKLTKKLSEQTDRTTDQYISSGLKLLMKG.

The protein belongs to the RuvA family. As to quaternary structure, homotetramer. Forms an RuvA(8)-RuvB(12)-Holliday junction (HJ) complex. HJ DNA is sandwiched between 2 RuvA tetramers; dsDNA enters through RuvA and exits via RuvB. An RuvB hexamer assembles on each DNA strand where it exits the tetramer. Each RuvB hexamer is contacted by two RuvA subunits (via domain III) on 2 adjacent RuvB subunits; this complex drives branch migration. In the full resolvosome a probable DNA-RuvA(4)-RuvB(12)-RuvC(2) complex forms which resolves the HJ.

It localises to the cytoplasm. In terms of biological role, the RuvA-RuvB-RuvC complex processes Holliday junction (HJ) DNA during genetic recombination and DNA repair, while the RuvA-RuvB complex plays an important role in the rescue of blocked DNA replication forks via replication fork reversal (RFR). RuvA specifically binds to HJ cruciform DNA, conferring on it an open structure. The RuvB hexamer acts as an ATP-dependent pump, pulling dsDNA into and through the RuvAB complex. HJ branch migration allows RuvC to scan DNA until it finds its consensus sequence, where it cleaves and resolves the cruciform DNA. This is Holliday junction branch migration complex subunit RuvA from Pediococcus pentosaceus (strain ATCC 25745 / CCUG 21536 / LMG 10740 / 183-1w).